Consider the following 177-residue polypeptide: Phycocyanin-645 beta chain (177 aa).

Y18 contributes to the mesobiliverdin binding site. (2R,3E)-phycocyanobilin-binding residues include K28, N35, and D39. Residues C50, D54, and C61 each contribute to the 15,16-dihydrobiliverdin site. (2R,3E)-phycocyanobilin is bound by residues R77, C82, R84, and D85. Q148 contacts 15,16-dihydrobiliverdin. Positions 154, 156, and 158 each coordinate (2R,3E)-phycocyanobilin.

The protein belongs to the phycobiliprotein family. As to quaternary structure, heterotetramer of 2 different alpha chains and 2 identical beta chains which form 2 alpha-beta heterodimers within the heterotetramer. Contains two phycocyanobilin chromophores, one mesobiliverdin chromophore and one 15,16-dihydrobiliverdin chromophore with binding mediated by both the alpha and beta subunits.

It is found in the plastid. The protein resides in the chloroplast thylakoid membrane. Its function is as follows. Light-harvesting photosynthetic tetrapyrrole chromophore-protein from the phycobiliprotein complex. The polypeptide is Phycocyanin-645 beta chain (Chroomonas sp).